Reading from the N-terminus, the 92-residue chain is Phospholemman (92 aa).

A signal peptide spans 1–20; sequence MASLSHILVLCVGLLAMVNA. The Extracellular segment spans residues 21–35; the sequence is EAPQEHDPFTYDYQS. A helical membrane pass occupies residues 36–56; it reads LRIGGLIIAGILFILGILIVL. Over 57 to 92 the chain is Cytoplasmic; it reads SRRCRCKFNQQQRTGEPDEEEGTFRSSIRRLSTRRR. Cys60 is lipidated: S-palmitoyl cysteine. At Cys62 the chain carries S-glutathionyl cysteine; alternate. Residue Cys62 is the site of S-palmitoyl cysteine; alternate attachment. Residues 65 to 92 are disordered; that stretch reads NQQQRTGEPDEEEGTFRSSIRRLSTRRR. Thr79 is modified (phosphothreonine). Ser82 carries the post-translational modification Phosphoserine. A Phosphoserine; by PKA and PKC modification is found at Ser83. Basic residues predominate over residues 83 to 92; the sequence is SIRRLSTRRR. Ser88 bears the Phosphoserine; by PKA mark. At Thr89 the chain carries Phosphothreonine; by PKC.

The protein belongs to the FXYD family. As to quaternary structure, homotetramer. Monomer. Regulatory subunit of the sodium/potassium-transporting ATPase (NKA) which is composed of a catalytic alpha subunit, an auxiliary non-catalytic beta subunit and an additional regulatory subunit. The monomeric form associates with NKA while the oligomeric form does not. Interacts with the catalytic alpha-1 subunit ATP1A1. Also interacts with the catalytic alpha-2 and alpha-3 subunits ATP1A2 and ATP1A3. Very little interaction with ATP1A1, ATP1A2 or ATP1A3 when phosphorylated at Ser-83. Interacts with the non-catalytic beta-1 subunit ATP1B1. Oxidative stress decreases interaction with ATP1A1 but increases interaction with ATP1B1. Post-translationally, major plasma membrane substrate for cAMP-dependent protein kinase (PKA) and protein kinase C (PKC) in several different tissues. Phosphorylated in response to insulin and adrenergic stimulation. Phosphorylation at Ser-88 stimulates sodium/potassium-transporting ATPase activity while the unphosphorylated form inhibits sodium/potassium-transporting ATPase activity. Phosphorylation increases tetramerization, decreases binding to ATP1A1 and reduces inhibition of ATP1A1 activity. Phosphorylation at Ser-83 leads to greatly reduced interaction with ATP1A1, ATP1A2 and ATP1A3. May be phosphorylated by DMPK. Palmitoylation increases half-life and stability and is enhanced upon phosphorylation at Ser-88 by PKA. As to expression, in the brain, detected in cerebellum and choroid plexus (at protein level).

Its subcellular location is the cell membrane. The protein resides in the sarcolemma. It localises to the apical cell membrane. It is found in the membrane. The protein localises to the caveola. Its subcellular location is the T-tubule. Its function is as follows. Associates with and regulates the activity of the sodium/potassium-transporting ATPase (NKA) which transports Na(+) out of the cell and K(+) into the cell. Inhibits NKA activity in its unphosphorylated state and stimulates activity when phosphorylated. Reduces glutathionylation of the NKA beta-1 subunit ATP1B1, thus reversing glutathionylation-mediated inhibition of ATP1B1. Contributes to female sexual development by maintaining the excitability of neurons which secrete gonadotropin-releasing hormone. This Bos taurus (Bovine) protein is Phospholemman.